We begin with the raw amino-acid sequence, 38 residues long: Large ribosomal subunit protein bL36 (38 aa).

This sequence belongs to the bacterial ribosomal protein bL36 family.

In Sorangium cellulosum (strain So ce56) (Polyangium cellulosum (strain So ce56)), this protein is Large ribosomal subunit protein bL36.